Consider the following 340-residue polypeptide: Glutaminase 2 (340 aa).

5 residues coordinate substrate: Ser-89, Asn-140, Asn-191, Tyr-215, and Tyr-267.

The protein belongs to the glutaminase family. Homotetramer.

It carries out the reaction L-glutamine + H2O = L-glutamate + NH4(+). In Yersinia pestis, this protein is Glutaminase 2.